The primary structure comprises 194 residues: Flavin prenyltransferase UbiX (194 aa).

Residues 9-11 (GAS), serine 35, 86-89 (SIKT), and arginine 121 each bind FMN. Positions 151 and 167 each coordinate dimethylallyl phosphate.

This sequence belongs to the UbiX/PAD1 family.

The enzyme catalyses dimethylallyl phosphate + FMNH2 = prenylated FMNH2 + phosphate. Involved in the carboxylation of phenylphosphate. In terms of biological role, flavin prenyltransferase that catalyzes the synthesis of the prenylated FMN cofactor (prenyl-FMN) for 4-hydroxy-3-polyprenylbenzoic acid decarboxylase UbiD. The prenyltransferase is metal-independent and links a dimethylallyl moiety from dimethylallyl monophosphate (DMAP) to the flavin N5 and C6 atoms of FMN. The protein is Flavin prenyltransferase UbiX of Thauera aromatica.